A 126-amino-acid polypeptide reads, in one-letter code: Large ribosomal subunit protein bL12 (126 aa).

This sequence belongs to the bacterial ribosomal protein bL12 family. Homodimer. Part of the ribosomal stalk of the 50S ribosomal subunit. Forms a multimeric L10(L12)X complex, where L10 forms an elongated spine to which 2 to 4 L12 dimers bind in a sequential fashion. Binds GTP-bound translation factors.

Forms part of the ribosomal stalk which helps the ribosome interact with GTP-bound translation factors. Is thus essential for accurate translation. In Geobacter sp. (strain M21), this protein is Large ribosomal subunit protein bL12.